The primary structure comprises 644 residues: Arginine--tRNA ligase (644 aa).

A 'HIGH' region motif is present at residues 134 to 144; it reads VNPTKPLHMGH.

The protein belongs to the class-I aminoacyl-tRNA synthetase family.

The protein localises to the cytoplasm. The catalysed reaction is tRNA(Arg) + L-arginine + ATP = L-arginyl-tRNA(Arg) + AMP + diphosphate. The chain is Arginine--tRNA ligase from Thermococcus sibiricus (strain DSM 12597 / MM 739).